A 212-amino-acid polypeptide reads, in one-letter code: uncharacterized protein (212 aa).

Residues 11 to 31 form a helical membrane-spanning segment; that stretch reads NLIFFQFIVYFFFISLTILII.

It is found in the membrane. This is an uncharacterized protein from Rickettsia prowazekii (strain Madrid E).